Reading from the N-terminus, the 76-residue chain is uncharacterized protein (76 aa).

3 consecutive transmembrane segments (helical) span residues 1-21, 35-55, and 56-76; these read MTAIIVYSCLTMCVIYFHLQL, CFDIFLLLIEMLKLIFYLLII, and NNKFYIFIIISIALITINTMI.

The protein resides in the cell membrane. This is an uncharacterized protein from Borreliella burgdorferi (strain ATCC 35210 / DSM 4680 / CIP 102532 / B31) (Borrelia burgdorferi).